The primary structure comprises 371 residues: MLCLGIETSCDETAVALFENGRPVLEKLASQADLHAVFGGVVPELASREHLRRLGPLLQALFAASGRSLADVDAIAVARGPGLLGSLLVGLAAAKGLSLATGKPLIGVDHLHAHLLAATIGRDVAFPALGLLVSGGHTQIVRLESALSLEVLGRTLDDAAGEAFDKAAKSFNLPYPGGVYIDVLGRGIAPDKTLFPRPFLDNDHFDFSFSGLKTAVASYAAAHPELRAGSLAEAGGAIDPEAWPMALRRACSSLNFAIAETLRIKFERALDRQPGPPASLIAAGGVAANGPIRAMLADLAARRGLPLYLPEPALCADNAVMIAAAGSRLAEAGYAHDLALTAVPRGRKVPWDYAGGPSGKAASVDSASPAQ.

Fe cation-binding residues include H110 and H114. Residues 132–136 (LVSGG), D165, G178, D182, and N289 each bind substrate. D317 contacts Fe cation.

It belongs to the KAE1 / TsaD family. The cofactor is Fe(2+).

The protein resides in the cytoplasm. It catalyses the reaction L-threonylcarbamoyladenylate + adenosine(37) in tRNA = N(6)-L-threonylcarbamoyladenosine(37) in tRNA + AMP + H(+). In terms of biological role, required for the formation of a threonylcarbamoyl group on adenosine at position 37 (t(6)A37) in tRNAs that read codons beginning with adenine. Is involved in the transfer of the threonylcarbamoyl moiety of threonylcarbamoyl-AMP (TC-AMP) to the N6 group of A37, together with TsaE and TsaB. TsaD likely plays a direct catalytic role in this reaction. This Solidesulfovibrio magneticus (strain ATCC 700980 / DSM 13731 / RS-1) (Desulfovibrio magneticus) protein is tRNA N6-adenosine threonylcarbamoyltransferase.